Consider the following 148-residue polypeptide: F420H(2)-dependent quinone reductase MT1609 (148 aa).

Coenzyme F420-(gamma-Glu)n is bound by residues 46–48 (AKT), 52–57 (RKTPLM), 68–71 (VASL), 79–83 (VWYHN), and tyrosine 125.

Belongs to the F420H(2)-dependent quinone reductase family.

Its subcellular location is the cell membrane. The enzyme catalyses oxidized coenzyme F420-(gamma-L-Glu)(n) + a quinol + H(+) = reduced coenzyme F420-(gamma-L-Glu)(n) + a quinone. Its function is as follows. Involved in a F420-dependent anti-oxidant mechanism that protects M.tuberculosis against oxidative stress and bactericidal agents. Catalyzes the F420H(2)-dependent two-electron reduction of quinones to dihydroquinones, thereby preventing the formation of cytotoxic semiquinones obtained by the one-electron reduction pathway. In vitro, catalyzes the reduction of menadione to menadiol; since menaquinone is the sole quinone electron carrier in the respiratory chain in M.tuberculosis, the physiological electron acceptor for Fqr-mediated F420H(2) oxidation is therefore likely to be the endogenous menaquinone found in the membrane fraction of M.tuberculosis. The polypeptide is F420H(2)-dependent quinone reductase MT1609 (Mycobacterium tuberculosis (strain CDC 1551 / Oshkosh)).